We begin with the raw amino-acid sequence, 283 residues long: Bifunctional protein FolD (283 aa).

NADP(+) contacts are provided by residues 165-167 (GAS), Ser-190, and Ile-231.

Belongs to the tetrahydrofolate dehydrogenase/cyclohydrolase family. Homodimer.

It catalyses the reaction (6R)-5,10-methylene-5,6,7,8-tetrahydrofolate + NADP(+) = (6R)-5,10-methenyltetrahydrofolate + NADPH. The catalysed reaction is (6R)-5,10-methenyltetrahydrofolate + H2O = (6R)-10-formyltetrahydrofolate + H(+). It participates in one-carbon metabolism; tetrahydrofolate interconversion. Its function is as follows. Catalyzes the oxidation of 5,10-methylenetetrahydrofolate to 5,10-methenyltetrahydrofolate and then the hydrolysis of 5,10-methenyltetrahydrofolate to 10-formyltetrahydrofolate. The protein is Bifunctional protein FolD of Bordetella bronchiseptica (strain ATCC BAA-588 / NCTC 13252 / RB50) (Alcaligenes bronchisepticus).